A 451-amino-acid polypeptide reads, in one-letter code: MAKYFGTDGVRGVANKELTPELAFKLGRYGGYVLAHNEGEKHPKVLVGRDTRVSGEMLESALIAGLISIGAEVMRLGVISTPGVAYLTREMEADLGVMISASHNPVPDNGIKFFGSDGFKLSDDQEQEIEHLLDQDNPDLPRPVGEDIVHYSDYFEGAQKYISYLKSTVDVDLAGMKIALDGAHGSTSSLAPFLFGDLEADTVTIGCNPNGYNINQEVGSTHPESLAKVVVESECDFGLAFDGDGDRLIAIDEKGNIVDGDQIMFIIGQAMSKNQELNNNMIVSTVMSNLGFYKALENEGIQSNKTKVGDRYVVEEMRRGNYNLGGEQSGHIVLMDYNTTGDGLLTGVQLASIIKMTGKSLSQLTSQMKKYPQSLVNVRVTDKYRVEENIDVQEIMTKVEVEMNGEGRILVRPSGTEPLVRVMVEAATDEDAQRYANTIAEVVQDKMGLDN.

The Phosphoserine intermediate role is filled by Ser102. Residues Ser102, Asp242, Asp244, and Asp246 each coordinate Mg(2+). A Phosphoserine modification is found at Ser102.

This sequence belongs to the phosphohexose mutase family. Mg(2+) serves as cofactor. Post-translationally, activated by phosphorylation.

It carries out the reaction alpha-D-glucosamine 1-phosphate = D-glucosamine 6-phosphate. Its function is as follows. Catalyzes the conversion of glucosamine-6-phosphate to glucosamine-1-phosphate. The protein is Phosphoglucosamine mutase of Staphylococcus saprophyticus subsp. saprophyticus (strain ATCC 15305 / DSM 20229 / NCIMB 8711 / NCTC 7292 / S-41).